Here is a 431-residue protein sequence, read N- to C-terminus: MENKSNSQILFAEAQQYIPGGVNSPVRAFKSVGQEFPRFIKFAKGAYLYDVDWNKYIDYIGSWGPMILGHCDDDVLEAIQCQVKNGLSYGAPCKQEVDLAKKIIELMPNIEQVRFVNSGTEATISAIRLARAYTCRNKIIKFEGCYHGHADEFLVAAGSGALSLGQPNSPGVPEDVVKDTLVASFNDMESIQALFEKYKDEIACIIVEPIAGNMNMIFPQDGFLAKLRAICDQNSSLLIFDEVMTGFRVALGGAQSIYNVKPDLTTLGKVIGGGMPVGAFGGRKEIMQKVSPAGPVYQAGTLSGNPIAMTAGIKTLEKISQPGFFDELGAKAQKLVDGLNEAAKAYDFNFHAKCLGGMFGLFFCSDKIAVNTFVDLGKTNLKMFNQFFAYMLDNGVYLAPSAYEAGFISIAHSDEDIEKTICLAKKFFQEN.

An N6-(pyridoxal phosphate)lysine modification is found at Lys269.

The protein belongs to the class-III pyridoxal-phosphate-dependent aminotransferase family. HemL subfamily. Homodimer. The cofactor is pyridoxal 5'-phosphate.

The protein resides in the cytoplasm. It carries out the reaction (S)-4-amino-5-oxopentanoate = 5-aminolevulinate. The protein operates within porphyrin-containing compound metabolism; protoporphyrin-IX biosynthesis; 5-aminolevulinate from L-glutamyl-tRNA(Glu): step 2/2. The chain is Glutamate-1-semialdehyde 2,1-aminomutase from Francisella tularensis subsp. holarctica (strain FTNF002-00 / FTA).